Consider the following 171-residue polypeptide: Peptide deformylase (171 aa).

Residues cysteine 91 and histidine 133 each contribute to the Fe cation site. Glutamate 134 is an active-site residue. Histidine 137 lines the Fe cation pocket.

The protein belongs to the polypeptide deformylase family. Requires Fe(2+) as cofactor.

The enzyme catalyses N-terminal N-formyl-L-methionyl-[peptide] + H2O = N-terminal L-methionyl-[peptide] + formate. Removes the formyl group from the N-terminal Met of newly synthesized proteins. Requires at least a dipeptide for an efficient rate of reaction. N-terminal L-methionine is a prerequisite for activity but the enzyme has broad specificity at other positions. This Mannheimia succiniciproducens (strain KCTC 0769BP / MBEL55E) protein is Peptide deformylase.